A 514-amino-acid polypeptide reads, in one-letter code: Peptide chain release factor 3 (514 aa).

One can recognise a tr-type G domain in the interval 8–268; sequence KKRRTFAIIS…IFLKFAPEPH (261 aa). GTP-binding positions include 17–24, 85–89, and 139–142; these read SHPDAGKT, DTPGH, and NKLD.

It belongs to the TRAFAC class translation factor GTPase superfamily. Classic translation factor GTPase family. PrfC subfamily.

Its subcellular location is the cytoplasm. Its function is as follows. Increases the formation of ribosomal termination complexes and stimulates activities of RF-1 and RF-2. It binds guanine nucleotides and has strong preference for UGA stop codons. It may interact directly with the ribosome. The stimulation of RF-1 and RF-2 is significantly reduced by GTP and GDP, but not by GMP. This chain is Peptide chain release factor 3, found in Streptococcus pneumoniae (strain P1031).